Consider the following 224-residue polypeptide: MSDPVVRLRELRRSFSQGGVTIDVLRGVNLEIRPGEIVALLGPSGSGKSTMLQAIGLLEGGFSGLIEIAGTDASKLSGDDRTALRRDHLGFVYQFHHLLPDFNAIENVVLPQLVAGTDRAVAEARAAELLSALGLAKRLDHRPSQLSGGEQQRVAVARALANRPEMVLADEPTGNLDEATADRVLEEFLKLVRGEGSAALIATHNERLALRMDRVVRLHEGVLE.

One can recognise an ABC transporter domain in the interval 6-224; it reads VRLRELRRSF…VVRLHEGVLE (219 aa). 42–49 contributes to the ATP binding site; that stretch reads GPSGSGKS.

It belongs to the ABC transporter superfamily. Lipoprotein translocase (TC 3.A.1.125) family. As to quaternary structure, the complex is composed of two ATP-binding proteins (LolD) and two transmembrane proteins (LolC and LolE).

The protein localises to the cell inner membrane. Part of the ABC transporter complex LolCDE involved in the translocation of mature outer membrane-directed lipoproteins, from the inner membrane to the periplasmic chaperone, LolA. Responsible for the formation of the LolA-lipoprotein complex in an ATP-dependent manner. This Novosphingobium aromaticivorans (strain ATCC 700278 / DSM 12444 / CCUG 56034 / CIP 105152 / NBRC 16084 / F199) protein is Lipoprotein-releasing system ATP-binding protein LolD.